A 259-amino-acid polypeptide reads, in one-letter code: Ribosomal RNA large subunit methyltransferase E (259 aa).

Residues Gly-49, Trp-51, Asp-69, Asp-88, and Asp-112 each contribute to the S-adenosyl-L-methionine site. The active-site Proton acceptor is the Lys-152. The TRAM domain occupies 199 to 257 (PIAEGDEHTVEIVDTGDEGDGIARIEGYTLFVDDAAEGDTVDVTVTDLKPNYGFAERRD).

This sequence belongs to the class I-like SAM-binding methyltransferase superfamily. RNA methyltransferase RlmE family.

Its subcellular location is the cytoplasm. The enzyme catalyses uridine(2552) in 23S rRNA + S-adenosyl-L-methionine = 2'-O-methyluridine(2552) in 23S rRNA + S-adenosyl-L-homocysteine + H(+). Specifically methylates the uridine in position 2552 of 23S rRNA at the 2'-O position of the ribose in the fully assembled 50S ribosomal subunit. This is Ribosomal RNA large subunit methyltransferase E from Halobacterium salinarum (strain ATCC 29341 / DSM 671 / R1).